The sequence spans 527 residues: T-complex protein 1 subunit delta (527 aa).

The protein belongs to the TCP-1 chaperonin family. As to quaternary structure, heterooligomeric complex of about 850 to 900 kDa that forms two stacked rings, 12 to 16 nm in diameter.

Its subcellular location is the cytoplasm. Functionally, molecular chaperone; assists the folding of proteins upon ATP hydrolysis. Known to play a role, in vitro, in the folding of actin and tubulin. The protein is T-complex protein 1 subunit delta (cct4) of Schizosaccharomyces pombe (strain 972 / ATCC 24843) (Fission yeast).